A 128-amino-acid polypeptide reads, in one-letter code: DNA-directed RNA polymerase subunit omega (128 aa).

The segment at 87-106 (ARSSQAAPKSAPGQEIGKSF) is disordered.

Belongs to the RNA polymerase subunit omega family. In terms of assembly, the RNAP catalytic core consists of 2 alpha, 1 beta, 1 beta' and 1 omega subunit. When a sigma factor is associated with the core the holoenzyme is formed, which can initiate transcription.

It catalyses the reaction RNA(n) + a ribonucleoside 5'-triphosphate = RNA(n+1) + diphosphate. In terms of biological role, promotes RNA polymerase assembly. Latches the N- and C-terminal regions of the beta' subunit thereby facilitating its interaction with the beta and alpha subunits. This chain is DNA-directed RNA polymerase subunit omega, found in Anaplasma marginale (strain Florida).